Reading from the N-terminus, the 756-residue chain is Phosphate transporter PHO1 homolog 6 (756 aa).

In terms of domain architecture, SPX spans 1-303 (MKFGKDFSSE…SRDAAKSYMK (303 aa)). Residues 1–355 (MKFGKDFSSE…KPKRERHRLT (355 aa)) lie on the Cytoplasmic side of the membrane. A helical membrane pass occupies residues 356–376 (FSTGFLGGCMFSLIVALVAIV). Over 377-396 (RTRNILQDDGQKQYMNTMFP) the chain is Extracellular. A helical membrane pass occupies residues 397–417 (LYSLFGFIMLHMTMYAANIYF). Over 418 to 440 (WRQYRVNYSFIFGFKQGTELGYK) the chain is Cytoplasmic. A helical membrane pass occupies residues 441-461 (QVLFVGFSIGALALLCVLANL). The Extracellular portion of the chain corresponds to 462–477 (DMETDPKTKDYQALTE). Residues 478-498 (LLPLFLLIAMFVVLVVPFNIF) form a helical membrane-spanning segment. The Cytoplasmic portion of the chain corresponds to 499-631 (YRSSRFFFLT…DEKDRQIIWR (133 aa)). Residues 562–756 (KDSQVFNTFL…SLPFNYEVDH (195 aa)) form the EXS domain. The chain crosses the membrane as a helical span at residues 632-652 (LLGGITSAMAVVFCTYWDLVY). Topologically, residues 653 to 676 (DWGLLNRTSKNPWLRDNLLIPHKE) are extracellular. The chain crosses the membrane as a helical span at residues 677–697 (VYVLAMILNVVLRFAWMQTVL). Over 698-756 (DFKFESIHTQTVVAVVASLEIIRRGIWNFFRLENEHLNNVGKYRAFKAVSLPFNYEVDH) the chain is Cytoplasmic.

It belongs to the SYG1 (TC 2.A.94) family. As to expression, specifically expressed in anther connective tissue.

It is found in the cell membrane. In terms of biological role, may transport inorganic phosphate (Pi). The polypeptide is Phosphate transporter PHO1 homolog 6 (PHO1-H6) (Arabidopsis thaliana (Mouse-ear cress)).